The following is a 272-amino-acid chain: Ethanolamine ammonia-lyase small subunit (272 aa).

Adenosylcob(III)alamin is bound by residues Val-161, Glu-182, and Cys-211.

The protein belongs to the EutC family. In terms of assembly, the basic unit is a heterodimer which dimerizes to form tetramers. The heterotetramers trimerize; 6 large subunits form a core ring with 6 small subunits projecting outwards. Adenosylcob(III)alamin serves as cofactor.

It localises to the bacterial microcompartment. It carries out the reaction ethanolamine = acetaldehyde + NH4(+). It participates in amine and polyamine degradation; ethanolamine degradation. In terms of biological role, catalyzes the deamination of various vicinal amino-alcohols to oxo compounds. Allows this organism to utilize ethanolamine as the sole source of nitrogen and carbon in the presence of external vitamin B12. The polypeptide is Ethanolamine ammonia-lyase small subunit (Pseudomonas putida (strain ATCC 700007 / DSM 6899 / JCM 31910 / BCRC 17059 / LMG 24140 / F1)).